Consider the following 190-residue polypeptide: MLIKKVELVKTAFKPGDYPEPVKREVAFAGRSNVGKSTLLNTLFQRKLAHTSSKPGKTRSINFYLVNSKYYFVDLPGYGFASASKQELARWKELIEDYFSTRDNLNLVTILMDSRHPMQKNDYKMLEWIKDYSIPFIVVLTKTDKLSGNELKKMIQIYEKELKLWGSPPIIPFSAKTRRGLNELLKILIP.

The EngB-type G domain occupies 22–190 (VKREVAFAGR…LNELLKILIP (169 aa)). GTP contacts are provided by residues 30 to 37 (GRSNVGKS), 56 to 60 (GKTRS), 74 to 77 (DLPG), 141 to 144 (TKTD), and 173 to 175 (FSA). Mg(2+) is bound by residues serine 37 and threonine 58.

The protein belongs to the TRAFAC class TrmE-Era-EngA-EngB-Septin-like GTPase superfamily. EngB GTPase family. Mg(2+) is required as a cofactor.

Necessary for normal cell division and for the maintenance of normal septation. This is Probable GTP-binding protein EngB from Kosmotoga olearia (strain ATCC BAA-1733 / DSM 21960 / TBF 19.5.1).